A 294-amino-acid chain; its full sequence is Cytidine deaminase (294 aa).

2 consecutive CMP/dCMP-type deaminase domains span residues 48-168 (DDDA…FGPR) and 186-294 (LKGD…VTLA). Substrate is bound at residue 89-91 (NME). H102 contacts Zn(2+). E104 serves as the catalytic Proton donor. Zn(2+) contacts are provided by C129 and C132.

It belongs to the cytidine and deoxycytidylate deaminase family. As to quaternary structure, homodimer. It depends on Zn(2+) as a cofactor.

It catalyses the reaction cytidine + H2O + H(+) = uridine + NH4(+). The catalysed reaction is 2'-deoxycytidine + H2O + H(+) = 2'-deoxyuridine + NH4(+). Its function is as follows. This enzyme scavenges exogenous and endogenous cytidine and 2'-deoxycytidine for UMP synthesis. The chain is Cytidine deaminase from Cronobacter sakazakii (strain ATCC BAA-894) (Enterobacter sakazakii).